A 122-amino-acid chain; its full sequence is Large ribosomal subunit protein uL14 (122 aa).

This sequence belongs to the universal ribosomal protein uL14 family. As to quaternary structure, part of the 50S ribosomal subunit. Forms a cluster with proteins L3 and L19. In the 70S ribosome, L14 and L19 interact and together make contacts with the 16S rRNA in bridges B5 and B8.

In terms of biological role, binds to 23S rRNA. Forms part of two intersubunit bridges in the 70S ribosome. In Thermosipho africanus (strain TCF52B), this protein is Large ribosomal subunit protein uL14.